A 279-amino-acid chain; its full sequence is Thymidylate synthase (279 aa).

141–142 (RR) contacts dUMP. Residue cysteine 161 is the Nucleophile of the active site. DUMP contacts are provided by residues 181 to 184 (RSND), asparagine 192, and 222 to 224 (HVY). Aspartate 184 serves as a coordination point for (6R)-5,10-methylene-5,6,7,8-tetrahydrofolate. Alanine 278 contacts (6R)-5,10-methylene-5,6,7,8-tetrahydrofolate.

Belongs to the thymidylate synthase family. Homodimer.

The catalysed reaction is dUMP + (6R)-5,10-methylene-5,6,7,8-tetrahydrofolate = 7,8-dihydrofolate + dTMP. The protein operates within pyrimidine metabolism; dTTP biosynthesis. Provides the sole de novo source of dTMP for DNA biosynthesis. This Bacillus subtilis (Bacteriophage phi-3T) protein is Thymidylate synthase (thyP3).